Reading from the N-terminus, the 1611-residue chain is Pentafunctional AROM polypeptide (1611 aa).

The tract at residues 1–406 (MSQVSGGKVP…VEERASTVSD (406 aa)) is 3-dehydroquinate synthase. NAD(+)-binding positions include 64 to 66 (DTN), 97 to 100 (EESK), 128 to 130 (GGV), and aspartate 133. Position 144 (arginine 144) interacts with 7-phospho-2-dehydro-3-deoxy-D-arabino-heptonate. Residue 153-154 (TT) participates in NAD(+) binding. Aspartate 160 and lysine 166 together coordinate 7-phospho-2-dehydro-3-deoxy-D-arabino-heptonate. An NAD(+)-binding site is contributed by lysine 175. Residue asparagine 176 participates in 7-phospho-2-dehydro-3-deoxy-D-arabino-heptonate binding. NAD(+)-binding positions include 193–196 (WLLT) and asparagine 204. Glutamate 208 provides a ligand contact to Zn(2+). 7-phospho-2-dehydro-3-deoxy-D-arabino-heptonate is bound by residues 208 to 211 (EVIK) and lysine 272. Glutamate 282 serves as the catalytic Proton acceptor; for 3-dehydroquinate synthase activity. Residues 286–290 (RNLVN) and histidine 293 contribute to the 7-phospho-2-dehydro-3-deoxy-D-arabino-heptonate site. Zn(2+) is bound at residue histidine 293. Catalysis depends on histidine 297, which acts as the Proton acceptor; for 3-dehydroquinate synthase activity. Residues histidine 309 and lysine 378 each contribute to the 7-phospho-2-dehydro-3-deoxy-D-arabino-heptonate site. A Zn(2+)-binding site is contributed by histidine 309. An EPSP synthase region spans residues 419-882 (VRESVSAPRP…WDVLGGPLNV (464 aa)). Cysteine 864 (for EPSP synthase activity) is an active-site residue. The shikimate kinase stretch occupies residues 915–1092 (DASIVLIGMR…VPISPAFFLS (178 aa)). 922–929 (GMRASGKS) provides a ligand contact to ATP. The tract at residues 1093–1309 (LTFPRVQDAW…AAPGQMSVRD (217 aa)) is 3-dehydroquinase. Histidine 1212 functions as the Proton acceptor; for 3-dehydroquinate dehydratase activity in the catalytic mechanism. Lysine 1240 (schiff-base intermediate with substrate; for 3-dehydroquinate dehydratase activity) is an active-site residue. The shikimate dehydrogenase stretch occupies residues 1322-1611 (KRHFFLFGSP…AAYRAAAASM (290 aa)).

In the N-terminal section; belongs to the sugar phosphate cyclases superfamily. Dehydroquinate synthase family. This sequence in the 2nd section; belongs to the EPSP synthase family. The protein in the 3rd section; belongs to the shikimate kinase family. It in the 4th section; belongs to the type-I 3-dehydroquinase family. In the C-terminal section; belongs to the shikimate dehydrogenase family. Homodimer. Zn(2+) is required as a cofactor.

Its subcellular location is the cytoplasm. The catalysed reaction is 7-phospho-2-dehydro-3-deoxy-D-arabino-heptonate = 3-dehydroquinate + phosphate. The enzyme catalyses 3-dehydroquinate = 3-dehydroshikimate + H2O. It catalyses the reaction shikimate + NADP(+) = 3-dehydroshikimate + NADPH + H(+). It carries out the reaction shikimate + ATP = 3-phosphoshikimate + ADP + H(+). The catalysed reaction is 3-phosphoshikimate + phosphoenolpyruvate = 5-O-(1-carboxyvinyl)-3-phosphoshikimate + phosphate. It functions in the pathway metabolic intermediate biosynthesis; chorismate biosynthesis; chorismate from D-erythrose 4-phosphate and phosphoenolpyruvate: step 2/7. Its pathway is metabolic intermediate biosynthesis; chorismate biosynthesis; chorismate from D-erythrose 4-phosphate and phosphoenolpyruvate: step 3/7. It participates in metabolic intermediate biosynthesis; chorismate biosynthesis; chorismate from D-erythrose 4-phosphate and phosphoenolpyruvate: step 4/7. The protein operates within metabolic intermediate biosynthesis; chorismate biosynthesis; chorismate from D-erythrose 4-phosphate and phosphoenolpyruvate: step 5/7. It functions in the pathway metabolic intermediate biosynthesis; chorismate biosynthesis; chorismate from D-erythrose 4-phosphate and phosphoenolpyruvate: step 6/7. In terms of biological role, the AROM polypeptide catalyzes 5 consecutive enzymatic reactions in prechorismate polyaromatic amino acid biosynthesis. The protein is Pentafunctional AROM polypeptide of Malassezia globosa (strain ATCC MYA-4612 / CBS 7966) (Dandruff-associated fungus).